Here is a 237-residue protein sequence, read N- to C-terminus: Demethylmenaquinone methyltransferase (237 aa).

S-adenosyl-L-methionine contacts are provided by residues threonine 62, aspartate 80, 102 to 103 (DA), and serine 119.

It belongs to the class I-like SAM-binding methyltransferase superfamily. MenG/UbiE family.

The catalysed reaction is a 2-demethylmenaquinol + S-adenosyl-L-methionine = a menaquinol + S-adenosyl-L-homocysteine + H(+). Its pathway is quinol/quinone metabolism; menaquinone biosynthesis; menaquinol from 1,4-dihydroxy-2-naphthoate: step 2/2. Functionally, methyltransferase required for the conversion of demethylmenaquinol (DMKH2) to menaquinol (MKH2). This chain is Demethylmenaquinone methyltransferase, found in Renibacterium salmoninarum (strain ATCC 33209 / DSM 20767 / JCM 11484 / NBRC 15589 / NCIMB 2235).